Consider the following 160-residue polypeptide: MIRVGNGFDVHQLVEGRPCIIGGVEIPFAKGLKGHSDADVLLHAVSDALLGAAALGDIGKHFPDTDERFKDADSRVLLRHVVALLKAKHYNIVNIDATIIAEAPKMAPHIARMVQHIAEDCDILADCVNVKATTSEKMGFVGRGEGIAAQAVCLIQKYQI.

A divalent metal cation is bound by residues aspartate 9 and histidine 11. 4-CDP-2-C-methyl-D-erythritol 2-phosphate-binding positions include aspartate 9 to histidine 11 and histidine 35 to serine 36. Histidine 43 serves as a coordination point for a divalent metal cation. Residues aspartate 57–glycine 59, phenylalanine 62–aspartate 66, alanine 101–alanine 107, threonine 133–glutamate 136, phenylalanine 140, and arginine 143 each bind 4-CDP-2-C-methyl-D-erythritol 2-phosphate.

Belongs to the IspF family. As to quaternary structure, homotrimer. A divalent metal cation serves as cofactor.

The catalysed reaction is 4-CDP-2-C-methyl-D-erythritol 2-phosphate = 2-C-methyl-D-erythritol 2,4-cyclic diphosphate + CMP. It participates in isoprenoid biosynthesis; isopentenyl diphosphate biosynthesis via DXP pathway; isopentenyl diphosphate from 1-deoxy-D-xylulose 5-phosphate: step 4/6. In terms of biological role, involved in the biosynthesis of isopentenyl diphosphate (IPP) and dimethylallyl diphosphate (DMAPP), two major building blocks of isoprenoid compounds. Catalyzes the conversion of 4-diphosphocytidyl-2-C-methyl-D-erythritol 2-phosphate (CDP-ME2P) to 2-C-methyl-D-erythritol 2,4-cyclodiphosphate (ME-CPP) with a corresponding release of cytidine 5-monophosphate (CMP). This chain is 2-C-methyl-D-erythritol 2,4-cyclodiphosphate synthase, found in Methylobacillus flagellatus (strain ATCC 51484 / DSM 6875 / VKM B-1610 / KT).